Here is a 498-residue protein sequence, read N- to C-terminus: Dynein regulatory complex subunit 2 (498 aa).

3 coiled-coil regions span residues valine 98–isoleucine 160, lysine 250–arginine 311, and serine 417–aspartate 441.

It belongs to the DRC2 family. As to quaternary structure, component of the nexin-dynein regulatory complex (N-DRC). Interacts with DRC1.

Its subcellular location is the cytoplasm. It localises to the cytoskeleton. It is found in the flagellum basal body. The protein resides in the cell projection. The protein localises to the cilium. Its subcellular location is the flagellum. It localises to the flagellum axoneme. Its function is as follows. Component of the nexin-dynein regulatory complex (N-DRC), a key regulator of ciliary/flagellar motility which maintains the alignment and integrity of the distal axoneme and regulates microtubule sliding in motile axonemes. Plays a critical role in the assembly of N-DRC and also stabilizes the assembly of multiple inner dynein arms and radial spokes. Coassembles with DRC1 to form a central scaffold needed for assembly of the N-DRC and its attachment to the outer doublet microtubules. This chain is Dynein regulatory complex subunit 2 (CCDC65), found in Bos taurus (Bovine).